The chain runs to 459 residues: 3-carboxy-cis,cis-muconate cycloisomerase (459 aa).

The protein belongs to the class-II fumarase/aspartase family. As to quaternary structure, homotetramer.

The protein resides in the cytoplasm. It carries out the reaction 2-(carboxymethyl)-5-oxo-2,5-dihydro-2-furoate = 3-carboxy-cis,cis-muconate + H(+). The protein operates within aromatic compound metabolism; beta-ketoadipate pathway; 5-oxo-4,5-dihydro-2-furylacetate from 3-carboxy-cis,cis-muconate: step 1/2. Catalyzes an anti cycloisomerization. The chain is 3-carboxy-cis,cis-muconate cycloisomerase (pcaB) from Pseudomonas aeruginosa (strain ATCC 15692 / DSM 22644 / CIP 104116 / JCM 14847 / LMG 12228 / 1C / PRS 101 / PAO1).